An 84-amino-acid chain; its full sequence is Large ribosomal subunit protein bL27 (84 aa).

This sequence belongs to the bacterial ribosomal protein bL27 family.

The sequence is that of Large ribosomal subunit protein bL27 from Kocuria rhizophila (strain ATCC 9341 / DSM 348 / NBRC 103217 / DC2201).